The primary structure comprises 2313 residues: Voltage-dependent R-type calcium channel subunit alpha-1E (2313 aa).

Residues 1-38 (MARFGEAVVARPGSGDGDSDQSRNRQGTPVPASGQAAA) form a disordered region. The Cytoplasmic segment spans residues 1 to 89 (MARFGEAVVA…KYAKKLIDWP (89 aa)). Residues Ser-14 and Ser-19 each carry the phosphoserine modification. An I repeat occupies 76-354 (NIVRKYAKKL…LVLGVLSGEF (279 aa)). The helical transmembrane segment at 90-108 (PFEYMILATIIANCIVLAL) threads the bilayer. Topologically, residues 109-127 (EQHLPEDDKTPMSRRLEKT) are extracellular. The helical transmembrane segment at 128–146 (EPYFIGIFCFEAGIKIVAL) threads the bilayer. Topologically, residues 147–158 (GFIFHKGSYLRN) are cytoplasmic. A helical membrane pass occupies residues 159-173 (GWNVMDFIVVLSGIL). Over 174–185 (ATAGTHFNTHVD) the chain is Extracellular. Residues 186–205 (LRTLRAVRVLRPLKLVSGIP) form a helical membrane-spanning segment. Over 206 to 223 (SLQIVLKSIMKAMVPLLQ) the chain is Cytoplasmic. A helical membrane pass occupies residues 224–244 (IGLLLFFAILMFAIIGLEFYS). The Extracellular portion of the chain corresponds to 245 to 326 (GKLHRACFMN…NTNDALGATW (82 aa)). Asn-254 is a glycosylation site (N-linked (GlcNAc...) asparagine). A helical membrane pass occupies residues 327–350 (NWLYFIPLIIIGSFFVLNLVLGVL). The Cytoplasmic portion of the chain corresponds to 351-476 (SGEFAKERER…ISIRHMVKSQ (126 aa)). A binding to the beta subunit region spans residues 374–391 (QQIERELNGYRAWIDKAE). Asp-426 is a Ca(2+) binding site. The residue at position 427 (Ser-427) is a Phosphoserine. Ser-428, Glu-430, and Cys-432 together coordinate Ca(2+). Thr-440 carries the post-translational modification Phosphothreonine. The stretch at 462-706 (ERLLRISIRH…VFLAIAVDNL (245 aa)) is one II repeat. The helical transmembrane segment at 477–496 (VFYWIVLSLVALNTACVAIV) threads the bilayer. Residues 497–509 (HHNQPQWLTHLLY) are Extracellular-facing. The chain crosses the membrane as a helical span at residues 510–529 (YAEFLFLGLFLLEMSLKMYG). Topologically, residues 530–538 (MGPRLYFHS) are cytoplasmic. The helical transmembrane segment at 539–557 (SFNCFDFGVTVGSIFEVVW) threads the bilayer. Residues 558–567 (AIFRPGTSFG) are Extracellular-facing. Residues 568 to 586 (ISVLRALRLLRIFKITKYW) traverse the membrane as a helical segment. Residues 587 to 605 (ASLRNLVVSLMSSMKSIIS) are Cytoplasmic-facing. Residues 606–625 (LLFLLFLFIVVFALLGMQLF) form a helical membrane-spanning segment. Residues 626-678 (GGRFNFNDGTPSANFDTFPAAIMTVFQILTGEDWNEVMYNGIRSQGGVSSGMW) are Extracellular-facing. The chain crosses the membrane as a helical span at residues 679 to 703 (SAIYFIVLTLFGNYTLLNVFLAIAV). The Cytoplasmic portion of the chain corresponds to 704 to 1148 (DNLANAQELT…TNPIRRACHY (445 aa)). The interval 729–774 (LQKAKEVSPMSAPNMPSIERDRRRRHHMSMWEPRSSHLRERRRRHH) is disordered. Residues Ser-736, Ser-745, Ser-793, Ser-815, and Ser-855 each carry the phosphoserine modification. Residues 851–984 (SRGGSLKGDG…EERAQDLRRT (134 aa)) are disordered. The span at 866–875 (ALDNQRTPLS) shows a compositional bias: polar residues. A compositionally biased stretch (basic residues) spans 913–926 (RHRQSQRRSRHRRV). The span at 933–945 (SSSASRSRSASQE) shows a compositional bias: low complexity. The residue at position 947 (Ser-947) is a Phosphoserine. Residues 955–983 (EGEKDHELRGNHGAKEPTIQEERAQDLRR) are compositionally biased toward basic and acidic residues. A Phosphoserine modification is found at Ser-1097. The interval 1103–1125 (EIREDEEEVEKKKQKKEKRETGK) is disordered. The III repeat unit spans residues 1140-1426 (NPIRRACHYI…IFVALIIITF (287 aa)). The chain crosses the membrane as a helical span at residues 1149–1165 (IVNLRYFEMCILLVIAA). Residues 1166 to 1189 (SSIALAAEDPVLTNSERNKVLRYF) are Extracellular-facing. Residues 1190-1209 (DYVFTGVFTFEMVIKMIDQG) form a helical membrane-spanning segment. Topologically, residues 1210-1217 (LILQDGSY) are cytoplasmic. Residues 1218–1240 (FRDLWNILDFVVVVGALVAFALA) form a helical membrane-spanning segment. Over 1241 to 1254 (NALGTNKGRDIKTI) the chain is Extracellular. A helical membrane pass occupies residues 1255-1272 (KSLRVLRVLRPLKTIKRL). Topologically, residues 1273 to 1291 (PKLKAVFDCVVTSLKNVFN) are cytoplasmic. A helical transmembrane segment spans residues 1292–1311 (ILIVYKLFMFIFAVIAVQLF). The Extracellular portion of the chain corresponds to 1312 to 1398 (KGKFFYCTDS…RGPSRSNRME (87 aa)). A helical membrane pass occupies residues 1399-1422 (MSIFYVVYFVVFPFFFVNIFVALI). Residues 1423 to 1479 (IITFQEQGDKMMEECSLEKNERACIDFAISAKPLTRYMPQNRHTFQYRVWHFVVSPS) are Cytoplasmic-facing. The stretch at 1463–1726 (NRHTFQYRVW…LFVAVIMDNF (264 aa)) is one IV repeat. The chain crosses the membrane as a helical span at residues 1480–1498 (FEYTIMAMIALNTVVLMMK). Residues 1499 to 1513 (YYSAPCTYELALKYL) are Extracellular-facing. A helical transmembrane segment spans residues 1514–1533 (NIAFTMVFSLECVLKVIAFG). The Cytoplasmic portion of the chain corresponds to 1534–1541 (FLNYFRDT). A helical membrane pass occupies residues 1542 to 1560 (WNIFDFITVIGSITEIILT). The Extracellular segment spans residues 1561-1571 (DSKLVNTSGFN). N-linked (GlcNAc...) asparagine glycans are attached at residues Asn-1566 and Asn-1571. Residues 1572 to 1590 (MSFLKLFRAARLIKLLRQG) form a helical membrane-spanning segment. Residues 1591-1609 (YTIRILLWTFVQSFKALPY) lie on the Cytoplasmic side of the membrane. A helical membrane pass occupies residues 1610 to 1629 (VCLLIAMLFFIYAIIGMQVF). Residues 1630–1698 (GNIKLDEESH…NENERCGTDL (69 aa)) are Extracellular-facing. Residues 1699–1724 (AYVYFVSFIFFCSFLMLNLFVAVIMD) traverse the membrane as a helical segment. Residues 1725–2313 (NFEYLTRDSS…LSDTEEDDKC (589 aa)) are Cytoplasmic-facing. One can recognise an EF-hand domain in the interval 1739 to 1774 (HHLDEFVRVWAEYDRAACGRIHYTEMYEMLTLMSPP). Asp-1752, Arg-1758, and Glu-1763 together coordinate Ca(2+). 3 disordered regions span residues 1970-2170 (VSEL…RPLL), 2206-2225 (CLTE…ASPQ), and 2263-2295 (SNTI…GPGM). Polar residues predominate over residues 2012–2023 (TDPSSMRRSFST). The segment covering 2055–2064 (HSSLRLSAHR) has biased composition (low complexity). The segment covering 2065-2085 (LNSDSGHKSDTHRSGGRERGR) has biased composition (basic and acidic residues). Phosphoserine occurs at positions 2094 and 2113. Over residues 2101 to 2118 (NSEERGTQADWESPERRQ) the composition is skewed to basic and acidic residues. The segment covering 2129-2152 (TPNRQGTGSLSESSIPSVSDTSTP) has biased composition (polar residues). The span at 2210–2225 (SSNSPHPQQSQHASPQ) shows a compositional bias: low complexity.

It belongs to the calcium channel alpha-1 subunit (TC 1.A.1.11) family. CACNA1E subfamily. As to quaternary structure, interacts with EFHC1. Voltage-dependent calcium channels are multisubunit complexes, consisting of alpha-1, alpha-2, beta and delta subunits in a 1:1:1:1 ratio. The channel activity is directed by the pore-forming and voltage-sensitive alpha-1 subunit. In many cases, this subunit is sufficient to generate voltage-sensitive calcium channel activity. The auxiliary subunits beta and alpha-2/delta linked by a disulfide bridge regulate the channel activity. Expressed in neuronal tissues and in kidney.

Its subcellular location is the membrane. The catalysed reaction is Ca(2+)(in) = Ca(2+)(out). In terms of biological role, voltage-sensitive calcium channels (VSCC) mediate the entry of calcium ions into excitable cells. They are also involved in a variety of calcium-dependent processes, including muscle contraction, hormone or neurotransmitter release, gene expression, cell motility, cell division and cell death. The isoform alpha-1E gives rise to R-type calcium currents. R-type calcium channels belong to the 'high-voltage activated' (HVA) group and are blocked by nickel. They are however insensitive to dihydropyridines (DHP). Calcium channels containing alpha-1E subunit could be involved in the modulation of firing patterns of neurons which is important for information processing. Functionally, voltage-sensitive calcium channels (VSCC) mediate the entry of calcium ions into excitable cells. They are also involved in a variety of calcium-dependent processes, including muscle contraction, hormone or neurotransmitter release, gene expression, cell motility, cell division and cell death. The isoform alpha-1E gives rise to R-type calcium currents. The protein is Voltage-dependent R-type calcium channel subunit alpha-1E (CACNA1E) of Homo sapiens (Human).